The following is a 400-amino-acid chain: Dual-specificity RNA methyltransferase RlmN (400 aa).

The active-site Proton acceptor is the E125. One can recognise a Radical SAM core domain in the interval 131–372 (ETDRGTLCVS…VRTPRGRDIL (242 aa)). The cysteines at positions 138 and 375 are disulfide-linked. 3 residues coordinate [4Fe-4S] cluster: C145, C149, and C152. Residues 201-202 (GE), S233, 255-257 (SLH), and N332 contribute to the S-adenosyl-L-methionine site. Catalysis depends on C375, which acts as the S-methylcysteine intermediate.

The protein belongs to the radical SAM superfamily. RlmN family. The cofactor is [4Fe-4S] cluster.

It is found in the cytoplasm. The enzyme catalyses adenosine(2503) in 23S rRNA + 2 reduced [2Fe-2S]-[ferredoxin] + 2 S-adenosyl-L-methionine = 2-methyladenosine(2503) in 23S rRNA + 5'-deoxyadenosine + L-methionine + 2 oxidized [2Fe-2S]-[ferredoxin] + S-adenosyl-L-homocysteine. It carries out the reaction adenosine(37) in tRNA + 2 reduced [2Fe-2S]-[ferredoxin] + 2 S-adenosyl-L-methionine = 2-methyladenosine(37) in tRNA + 5'-deoxyadenosine + L-methionine + 2 oxidized [2Fe-2S]-[ferredoxin] + S-adenosyl-L-homocysteine. Specifically methylates position 2 of adenine 2503 in 23S rRNA and position 2 of adenine 37 in tRNAs. m2A2503 modification seems to play a crucial role in the proofreading step occurring at the peptidyl transferase center and thus would serve to optimize ribosomal fidelity. In Bradyrhizobium diazoefficiens (strain JCM 10833 / BCRC 13528 / IAM 13628 / NBRC 14792 / USDA 110), this protein is Dual-specificity RNA methyltransferase RlmN.